Consider the following 394-residue polypeptide: MISYLASIFLLATVSAVPSGRVEVVFPSVETSRSGVKTVKFTALDQNVELKLRSAGEILGKHFAIQDVDVESLRRKIYRDSVNGAALLIDEDGPLTIEGIVNSKLRIQPFESGRIIKDGMIAHQIVEVIDDKKSYDRVAVIHENVKRNAENVSRMAEENDCIVVEYYIVTDSAFTKRFKSNSALTNYVTVMFTGVQNLMDTLELGIGVRLLGVTAFNEETEPSFIKDNLIPGPPEAFEPDVLITAMSQYYCNHQTGLAKDTDLIFLITARGMGDPREDGTVDINTAGIANSAGVCKPCLKAGIATDDSNYNERVDTLAHESVHLLGSPHDGEGPDQVSVEGSPGAANCPAKAGYIMGNRKDPNKYKFSPCTKKCVEYLLSKPTAFCIFEQCSDF.

An N-terminal signal peptide occupies residues 1–16 (MISYLASIFLLATVSA). The propeptide occupies 17 to 158 (VPSGRVEVVF…AENVSRMAEE (142 aa)). Residue asparagine 151 is glycosylated (N-linked (GlcNAc...) asparagine). A Peptidase M12B domain is found at 162-390 (IVVEYYIVTD…KPTAFCIFEQ (229 aa)). Cysteine 295 and cysteine 386 are joined by a disulfide. Histidine 319 contacts Zn(2+). The active site involves glutamate 320. Residues histidine 323 and histidine 329 each contribute to the Zn(2+) site.

It belongs to the venom metalloproteinase (M12B) family. Requires Zn(2+) as cofactor. In terms of tissue distribution, expressed by the venom gland.

The protein resides in the secreted. Inhibited by EDTA. In terms of biological role, acts as a metalloprotease. Penetrates intact tissue and specifically cleaves the vesicle-associated membrane protein 2 (VAMP2) (part of the SNARE complex) involved in pancreatic secretion, thus disrupting the normal vesicular traffic. This chain is Venom metalloproteinase antarease-like TtrivMP_A, found in Tityus trivittatus (Argentinean scorpion).